The primary structure comprises 137 residues: Small ribosomal subunit protein uS12 (137 aa).

Disordered stretches follow at residues Met1–Ser21 and Val34–Lys57.

Belongs to the universal ribosomal protein uS12 family. In terms of assembly, part of the 30S ribosomal subunit. Contacts proteins S8 and S17. May interact with IF1 in the 30S initiation complex.

In terms of biological role, with S4 and S5 plays an important role in translational accuracy. Its function is as follows. Interacts with and stabilizes bases of the 16S rRNA that are involved in tRNA selection in the A site and with the mRNA backbone. Located at the interface of the 30S and 50S subunits, it traverses the body of the 30S subunit contacting proteins on the other side and probably holding the rRNA structure together. The combined cluster of proteins S8, S12 and S17 appears to hold together the shoulder and platform of the 30S subunit. This Streptococcus mutans serotype c (strain ATCC 700610 / UA159) protein is Small ribosomal subunit protein uS12.